We begin with the raw amino-acid sequence, 268 residues long: Ubiquinone biosynthesis protein COQ4 homolog 1, mitochondrial (268 aa).

The segment covering 1 to 10 has biased composition (basic residues); the sequence is MFLRRVHPVR. The transit peptide at 1–18 directs the protein to the mitochondrion; sequence MFLRRVHPVRLGHASQRS. The interval 1–44 is disordered; that stretch reads MFLRRVHPVRLGHASQRSLTTTKSRNESTTTTVEAPQAAPSPPP. Low complexity predominate over residues 20–38; it reads TTTKSRNESTTTTVEAPQA. Residues histidine 177, aspartate 178, histidine 181, and glutamate 193 each contribute to the Zn(2+) site.

It belongs to the COQ4 family. In terms of assembly, component of a multi-subunit COQ enzyme complex. Zn(2+) is required as a cofactor.

The protein localises to the mitochondrion inner membrane. The enzyme catalyses a 4-hydroxy-3-methoxy-5-(all-trans-polyprenyl)benzoate + H(+) = a 2-methoxy-6-(all-trans-polyprenyl)phenol + CO2. It functions in the pathway cofactor biosynthesis; ubiquinone biosynthesis. Lyase that catalyzes the C1-decarboxylation of 4-hydroxy-3-methoxy-5-(all-trans-polyprenyl)benzoic acid into 2-methoxy-6-(all-trans-polyprenyl)phenol during ubiquinone biosynthesis. This is Ubiquinone biosynthesis protein COQ4 homolog 1, mitochondrial from Culex quinquefasciatus (Southern house mosquito).